We begin with the raw amino-acid sequence, 245 residues long: 1-(5-phosphoribosyl)-5-[(5-phosphoribosylamino)methylideneamino] imidazole-4-carboxamide isomerase (245 aa).

The Proton acceptor role is filled by Asp8. Catalysis depends on Asp129, which acts as the Proton donor.

The protein belongs to the HisA/HisF family.

It localises to the cytoplasm. It catalyses the reaction 1-(5-phospho-beta-D-ribosyl)-5-[(5-phospho-beta-D-ribosylamino)methylideneamino]imidazole-4-carboxamide = 5-[(5-phospho-1-deoxy-D-ribulos-1-ylimino)methylamino]-1-(5-phospho-beta-D-ribosyl)imidazole-4-carboxamide. It functions in the pathway amino-acid biosynthesis; L-histidine biosynthesis; L-histidine from 5-phospho-alpha-D-ribose 1-diphosphate: step 4/9. The polypeptide is 1-(5-phosphoribosyl)-5-[(5-phosphoribosylamino)methylideneamino] imidazole-4-carboxamide isomerase (Rhodopseudomonas palustris (strain BisB18)).